Reading from the N-terminus, the 122-residue chain is Mth938 domain-containing protein (122 aa).

The MTH138-like domain stretch occupies residues 6-122 (IASLSWGQMK…RVGGVFHSTC (117 aa)).

This sequence belongs to the AAMDC family.

The protein localises to the cytoplasm. In terms of biological role, may play a role in preadipocyte differentiation and adipogenesis. The polypeptide is Mth938 domain-containing protein (AAMDC) (Homo sapiens (Human)).